The following is a 359-amino-acid chain: Mannonate dehydratase (359 aa).

It belongs to the mannonate dehydratase family. The cofactor is Fe(2+). Mn(2+) serves as cofactor.

It carries out the reaction D-mannonate = 2-dehydro-3-deoxy-D-gluconate + H2O. It functions in the pathway carbohydrate metabolism; pentose and glucuronate interconversion. Its function is as follows. Catalyzes the dehydration of D-mannonate. This Bacillus subtilis (strain 168) protein is Mannonate dehydratase (uxuA).